We begin with the raw amino-acid sequence, 357 residues long: Probable dual-specificity RNA methyltransferase RlmN (357 aa).

The Proton acceptor role is filled by glutamate 95. The region spanning 106–340 (NRDRHTVCVS…VSVREEKGTD (235 aa)) is the Radical SAM core domain. The cysteines at positions 113 and 345 are disulfide-linked. Positions 120, 124, and 127 each coordinate [4Fe-4S] cluster. S-adenosyl-L-methionine contacts are provided by residues 172-173 (GE), serine 204, 227-229 (SLH), and asparagine 302. The S-methylcysteine intermediate role is filled by cysteine 345.

Belongs to the radical SAM superfamily. RlmN family. It depends on [4Fe-4S] cluster as a cofactor.

The protein resides in the cytoplasm. The catalysed reaction is adenosine(2503) in 23S rRNA + 2 reduced [2Fe-2S]-[ferredoxin] + 2 S-adenosyl-L-methionine = 2-methyladenosine(2503) in 23S rRNA + 5'-deoxyadenosine + L-methionine + 2 oxidized [2Fe-2S]-[ferredoxin] + S-adenosyl-L-homocysteine. The enzyme catalyses adenosine(37) in tRNA + 2 reduced [2Fe-2S]-[ferredoxin] + 2 S-adenosyl-L-methionine = 2-methyladenosine(37) in tRNA + 5'-deoxyadenosine + L-methionine + 2 oxidized [2Fe-2S]-[ferredoxin] + S-adenosyl-L-homocysteine. Its function is as follows. Specifically methylates position 2 of adenine 2503 in 23S rRNA and position 2 of adenine 37 in tRNAs. In Desulfitobacterium hafniense (strain Y51), this protein is Probable dual-specificity RNA methyltransferase RlmN.